Reading from the N-terminus, the 305-residue chain is Protoheme IX farnesyltransferase 2 (305 aa).

A run of 8 helical transmembrane segments spans residues 38–58 (LITT…SFLG), 60–80 (INTV…SCAI), 115–135 (ILLV…AAVI), 157–177 (INTV…WTAV), 181–201 (IGVV…PHFL), 227–247 (VTKR…FFLG), 249–269 (LGLP…ILGL), and 285–305 (FVYS…LTLF).

The protein belongs to the UbiA prenyltransferase family. Protoheme IX farnesyltransferase subfamily. In terms of assembly, interacts with CtaA.

It localises to the cell membrane. It catalyses the reaction heme b + (2E,6E)-farnesyl diphosphate + H2O = Fe(II)-heme o + diphosphate. It participates in porphyrin-containing compound metabolism; heme O biosynthesis; heme O from protoheme: step 1/1. Functionally, converts heme B (protoheme IX) to heme O by substitution of the vinyl group on carbon 2 of heme B porphyrin ring with a hydroxyethyl farnesyl side group. This chain is Protoheme IX farnesyltransferase 2 (ctaB2), found in Bacillus subtilis (strain 168).